Consider the following 505-residue polypeptide: T-cell activation inhibitor, mitochondrial (505 aa).

Residues 216–243 (LKNSLPLRKELDRLKNELSELLQLSDIR) adopt a coiled-coil conformation.

In terms of tissue distribution, expressed in peripheral blood leukocytes, mainly in T-lymphocytes.

It is found in the mitochondrion. In terms of biological role, may regulate T-cell apoptosis. This Rattus norvegicus (Rat) protein is T-cell activation inhibitor, mitochondrial (Tcaim).